A 345-amino-acid chain; its full sequence is Delta(1)-pyrroline-2-carboxylate reductase (345 aa).

Ser-47 functions as the Charge relay system in the catalytic mechanism. His-48 acts as the Proton donor in catalysis. Arg-52 contributes to the substrate binding site. Position 121–125 (121–125 (HFSAL)) interacts with NADP(+). Thr-161 lines the substrate pocket. 179–181 (DFA) is a binding site for NADP(+). 187–188 (RG) contacts substrate. The active-site Charge relay system is Glu-189. NADP(+) contacts are provided by residues 230–231 (HK) and 305–311 (RLPSGRR).

The protein belongs to the LDH2/MDH2 oxidoreductase family. Homodimer.

The catalysed reaction is L-proline + NAD(+) = 1-pyrroline-2-carboxylate + NADH + H(+). It catalyses the reaction L-proline + NADP(+) = 1-pyrroline-2-carboxylate + NADPH + H(+). Catalyzes the reduction of Delta(1)-pyrroline-2-carboxylate (Pyr2C) to L-proline, using NADPH as the electron donor. Is likely involved in a degradation pathway that converts trans-3-hydroxy-L-proline (t3LHyp) to L-proline, which would allow A.tumefaciens to grow on t3LHyp as a sole carbon source. The polypeptide is Delta(1)-pyrroline-2-carboxylate reductase (Agrobacterium fabrum (strain C58 / ATCC 33970) (Agrobacterium tumefaciens (strain C58))).